We begin with the raw amino-acid sequence, 122 residues long: Large ribosomal subunit protein uL14 (122 aa).

It belongs to the universal ribosomal protein uL14 family. In terms of assembly, part of the 50S ribosomal subunit. Forms a cluster with proteins L3 and L19. In the 70S ribosome, L14 and L19 interact and together make contacts with the 16S rRNA in bridges B5 and B8.

In terms of biological role, binds to 23S rRNA. Forms part of two intersubunit bridges in the 70S ribosome. This is Large ribosomal subunit protein uL14 from Pseudomonas savastanoi pv. phaseolicola (strain 1448A / Race 6) (Pseudomonas syringae pv. phaseolicola (strain 1448A / Race 6)).